A 443-amino-acid polypeptide reads, in one-letter code: ATP-dependent protease ATPase subunit HslU (443 aa).

Residues Ile-20, 62-67 (GVGKTE), Asp-255, Glu-321, and Arg-393 contribute to the ATP site.

This sequence belongs to the ClpX chaperone family. HslU subfamily. As to quaternary structure, a double ring-shaped homohexamer of HslV is capped on each side by a ring-shaped HslU homohexamer. The assembly of the HslU/HslV complex is dependent on binding of ATP.

It localises to the cytoplasm. In terms of biological role, ATPase subunit of a proteasome-like degradation complex; this subunit has chaperone activity. The binding of ATP and its subsequent hydrolysis by HslU are essential for unfolding of protein substrates subsequently hydrolyzed by HslV. HslU recognizes the N-terminal part of its protein substrates and unfolds these before they are guided to HslV for hydrolysis. In Helicobacter pylori (strain P12), this protein is ATP-dependent protease ATPase subunit HslU.